We begin with the raw amino-acid sequence, 654 residues long: Interferon-induced GTP-binding protein Mx1 (654 aa).

Met-1 is modified (N-acetylmethionine). Composition is skewed to basic and acidic residues over residues 1-12 and 23-32; these read MVLSDLDIKEPD and DMVREHETES. Residues 1 to 33 are disordered; sequence MVLSDLDIKEPDSPESGLNGSDDMVREHETESK. The Dynamin-type G domain occupies 62 to 335; that stretch reads DLALPAIAVI…LIMHICKTLP (274 aa). Residues 72-79 form a G1 motif region; it reads GDQSSGKS. 72–79 lines the GTP pocket; sequence GDQSSGKS. Positions 97–99 are G2 motif; that stretch reads VTR. The segment at 173–176 is G3 motif; sequence DLPG. Residues 173 to 177 and 242 to 245 each bind GTP; these read DLPGI and TKPD. The segment at 242–245 is G4 motif; sequence TKPD. The segment at 274–277 is G5 motif; sequence KCRG. The tract at residues 336–361 is bundle signaling element (BSE); sequence LLENQIKETHQRITEELQKYGKDIPE. A middle domain region spans residues 361–528; the sequence is EEESEKMFSL…HFQMEQLVYC (168 aa). The interval 362-624 is stalk; that stretch reads EESEKMFSLI…KDQYDWLLKE (263 aa). Residues 544–563 are disordered; the sequence is EAEEEKKKKSNHYYQSEDSE. A critical for lipid-binding region spans residues 549-552; that stretch reads KKKK. The GED domain maps to 566–654; that stretch reads TAEIFQHLMA…ARQRLAKFPG (89 aa).

It belongs to the TRAFAC class dynamin-like GTPase superfamily. Dynamin/Fzo/YdjA family. Homooligomer. Oligomerizes into multimeric filamentous or ring-like structures by virtue of its stalk domain. Oligomerization is critical for GTPase activity, protein stability, and recognition of viral target structures. Interacts with TRPC1, TRPC3, TRPC4, TRPC5, TRPC6 and TRPC7. Interacts with HSPA5. Interacts with DDX39A and DDX39B. Interacts with TUBB/TUBB5. Post-translationally, ISGylated.

It localises to the cytoplasm. It is found in the endoplasmic reticulum membrane. Its subcellular location is the perinuclear region. Its function is as follows. Interferon-induced dynamin-like GTPase with antiviral activity. The protein is Interferon-induced GTP-binding protein Mx1 (MX1) of Ovis aries (Sheep).